The following is a 186-amino-acid chain: Elongation factor P (186 aa).

The protein belongs to the elongation factor P family.

The protein resides in the cytoplasm. It functions in the pathway protein biosynthesis; polypeptide chain elongation. Functionally, involved in peptide bond synthesis. Stimulates efficient translation and peptide-bond synthesis on native or reconstituted 70S ribosomes in vitro. Probably functions indirectly by altering the affinity of the ribosome for aminoacyl-tRNA, thus increasing their reactivity as acceptors for peptidyl transferase. This Cupriavidus necator (strain ATCC 17699 / DSM 428 / KCTC 22496 / NCIMB 10442 / H16 / Stanier 337) (Ralstonia eutropha) protein is Elongation factor P.